A 530-amino-acid chain; its full sequence is Anthranilate synthase component 1, pyocyanine specific (530 aa).

331-332 (GT) serves as a coordination point for substrate. Glu364 contributes to the Mg(2+) binding site. Substrate is bound by residues Tyr452, Arg472, 486-488 (GAG), and Gly488. Glu501 provides a ligand contact to Mg(2+).

Belongs to the anthranilate synthase component I family. In terms of assembly, heterotetramer consisting of two non-identical subunits: a beta subunit (PhnB) and a large alpha subunit (PhnA). Mg(2+) is required as a cofactor.

It catalyses the reaction chorismate + L-glutamine = anthranilate + pyruvate + L-glutamate + H(+). It functions in the pathway secondary metabolite biosynthesis; pyocyanine biosynthesis. Functionally, part of a heterotetrameric complex that catalyzes the two-step biosynthesis of anthranilate, a precursor for Pseudomonas quinolone signal (2-heptyl-3-hydroxy-4-quinolone; PQS) production which is required to induce the genes for the biosynthesis of the virulence factor pyocyanine (PCN), a characteristic blue-green phenazine pigment produced by P.aeruginosa. In the first step, the glutamine-binding beta subunit (PhnB) of anthranilate synthase (AS) provides the glutamine amidotransferase activity which generates ammonia as a substrate that, along with chorismate, is used in the second step, catalyzed by the large alpha subunit of AS (PhnA) to produce anthranilate. This chain is Anthranilate synthase component 1, pyocyanine specific, found in Pseudomonas aeruginosa (strain ATCC 15692 / DSM 22644 / CIP 104116 / JCM 14847 / LMG 12228 / 1C / PRS 101 / PAO1).